The primary structure comprises 475 residues: Phosphoglucosamine mutase (475 aa).

Catalysis depends on S126, which acts as the Phosphoserine intermediate. Mg(2+)-binding residues include S126, D265, D267, and D269. S126 is modified (phosphoserine).

It belongs to the phosphohexose mutase family. Mg(2+) is required as a cofactor. In terms of processing, activated by phosphorylation.

The catalysed reaction is alpha-D-glucosamine 1-phosphate = D-glucosamine 6-phosphate. In terms of biological role, catalyzes the conversion of glucosamine-6-phosphate to glucosamine-1-phosphate. This Synechococcus sp. (strain ATCC 27144 / PCC 6301 / SAUG 1402/1) (Anacystis nidulans) protein is Phosphoglucosamine mutase.